A 468-amino-acid polypeptide reads, in one-letter code: Uronate isomerase (468 aa).

This sequence belongs to the metallo-dependent hydrolases superfamily. Uronate isomerase family.

The catalysed reaction is D-glucuronate = D-fructuronate. It catalyses the reaction aldehydo-D-galacturonate = keto-D-tagaturonate. The protein operates within carbohydrate metabolism; pentose and glucuronate interconversion. This is Uronate isomerase from Brachyspira hyodysenteriae (strain ATCC 49526 / WA1).